The following is a 228-amino-acid chain: MLLPIPDVLSPAQLSQLRAQLDVADWADGRITAGHQSAQAKDNAQLPEDSAVAREAGALVLEALARSSTFFSAVLPRRIYPPLFNRYSGGQSFGYHVDNAVRYDRSRGGAEAVRTDVSATLFLSDPDSYDGGELVIEDTYGTQSVKLPAGHLVIYPGTSLHRVMPVTRGARVACFFWAQSMLRDAAQRRLLFELDVSIRRLTQDTPGHPSLIQLTGVYHNLLRQWADV.

Residues 78 to 180 (RIYPPLFNRY…RVACFFWAQS (103 aa)) enclose the Fe2OG dioxygenase domain. Fe cation contacts are provided by H96, D98, and H161. 2-oxoglutarate is bound at residue R171.

Requires Fe(2+) as cofactor. It depends on L-ascorbate as a cofactor.

The sequence is that of PKHD-type hydroxylase XAC2942 from Xanthomonas axonopodis pv. citri (strain 306).